Here is a 274-residue protein sequence, read N- to C-terminus: Large ribosomal subunit protein uL2cz/uL2cy (274 aa).

2 disordered regions span residues 1–21 (MAIH…VDSQ) and 225–254 (PVDH…PALG).

It belongs to the universal ribosomal protein uL2 family. In terms of assembly, part of the 50S ribosomal subunit.

The protein resides in the plastid. Its subcellular location is the chloroplast. In Draba nemorosa (Woodland whitlowgrass), this protein is Large ribosomal subunit protein uL2cz/uL2cy (rpl2-A).